The primary structure comprises 203 residues: Ras-like protein 1 (203 aa).

Residue 17-24 (GGGGVGKS) coordinates GTP. An Effector region motif is present at residues 39-47 (YDPTIEDSY). Residues 64–68 (DTAGQ) and 123–126 (NKCD) each bind GTP. At Cys200 the chain carries Cysteine methyl ester. The S-farnesyl cysteine moiety is linked to residue Cys200. The propeptide at 201–203 (ILM) is removed in mature form.

It belongs to the small GTPase superfamily. Ras family.

It is found in the cell membrane. It catalyses the reaction GTP + H2O = GDP + phosphate + H(+). Alternates between an inactive form bound to GDP and an active form bound to GTP. Activated by a guanine nucleotide-exchange factor (GEF) and inactivated by a GTPase-activating protein (GAP). The polypeptide is Ras-like protein 1 (RAS1) (Mucor circinelloides f. lusitanicus (Mucor racemosus var. lusitanicus)).